Here is a 428-residue protein sequence, read N- to C-terminus: Histidine--tRNA ligase (428 aa).

Belongs to the class-II aminoacyl-tRNA synthetase family. Homodimer.

Its subcellular location is the cytoplasm. It catalyses the reaction tRNA(His) + L-histidine + ATP = L-histidyl-tRNA(His) + AMP + diphosphate + H(+). This chain is Histidine--tRNA ligase, found in Lactobacillus delbrueckii subsp. bulgaricus (strain ATCC 11842 / DSM 20081 / BCRC 10696 / JCM 1002 / NBRC 13953 / NCIMB 11778 / NCTC 12712 / WDCM 00102 / Lb 14).